A 308-amino-acid chain; its full sequence is tRNA dimethylallyltransferase (308 aa).

Residue 19 to 26 participates in ATP binding; it reads GPTASGKS. 21 to 26 contacts substrate; sequence TASGKS. The segment at 44–47 is interaction with substrate tRNA; it reads DSMQ.

Belongs to the IPP transferase family. Monomer. The cofactor is Mg(2+).

It catalyses the reaction adenosine(37) in tRNA + dimethylallyl diphosphate = N(6)-dimethylallyladenosine(37) in tRNA + diphosphate. Functionally, catalyzes the transfer of a dimethylallyl group onto the adenine at position 37 in tRNAs that read codons beginning with uridine, leading to the formation of N6-(dimethylallyl)adenosine (i(6)A). The polypeptide is tRNA dimethylallyltransferase (Methylobacterium radiotolerans (strain ATCC 27329 / DSM 1819 / JCM 2831 / NBRC 15690 / NCIMB 10815 / 0-1)).